A 105-amino-acid chain; its full sequence is ATP synthase subunit c (105 aa).

2 helical membrane-spanning segments follow: residues 37–57 and 82–102; these read IGAG…GYIF and SAIS…LIFV.

It belongs to the ATPase C chain family. In terms of assembly, F-type ATPases have 2 components, F(1) - the catalytic core - and F(0) - the membrane proton channel. F(1) has five subunits: alpha(3), beta(3), gamma(1), delta(1), epsilon(1). F(0) has three main subunits: a(1), b(2) and c(10-14). The alpha and beta chains form an alternating ring which encloses part of the gamma chain. F(1) is attached to F(0) by a central stalk formed by the gamma and epsilon chains, while a peripheral stalk is formed by the delta and b chains.

The protein localises to the cell membrane. In terms of biological role, f(1)F(0) ATP synthase produces ATP from ADP in the presence of a proton or sodium gradient. F-type ATPases consist of two structural domains, F(1) containing the extramembraneous catalytic core and F(0) containing the membrane proton channel, linked together by a central stalk and a peripheral stalk. During catalysis, ATP synthesis in the catalytic domain of F(1) is coupled via a rotary mechanism of the central stalk subunits to proton translocation. Key component of the F(0) channel; it plays a direct role in translocation across the membrane. A homomeric c-ring of between 10-14 subunits forms the central stalk rotor element with the F(1) delta and epsilon subunits. The chain is ATP synthase subunit c from Mycoplasma pneumoniae (strain ATCC 29342 / M129 / Subtype 1) (Mycoplasmoides pneumoniae).